Reading from the N-terminus, the 164-residue chain is Protein eva-1 homolog B (164 aa).

Residues 29–49 (GLYFVLGVCFGLLLTLCLLVI) form a helical membrane-spanning segment. The disordered stretch occupies residues 56-110 (RSRPRTPAPRRDPRSSTLEPEDEDDEEDEDTMTRLGPDDTLQGQELSTEPDGPLS). A compositionally biased stretch (acidic residues) spans 74–85 (EPEDEDDEEDED). Threonine 86, threonine 149, and threonine 157 each carry phosphothreonine.

The protein belongs to the EVA1 family.

Its subcellular location is the membrane. This is Protein eva-1 homolog B (Eva1b) from Mus musculus (Mouse).